The sequence spans 89 residues: MAHKKSGGSSRNGRDSNPKYLGVKKYGGEVVVPGMIIVRQRGTVKWPGKGVGMGKDHTLFALKGGKVEYAHKSGGRIYVNIVQMADAAE.

The interval 1-21 (MAHKKSGGSSRNGRDSNPKYL) is disordered.

This sequence belongs to the bacterial ribosomal protein bL27 family.

In Hyphomonas neptunium (strain ATCC 15444), this protein is Large ribosomal subunit protein bL27.